The chain runs to 238 residues: MAVEGGMKCVKFLLYVLLLAFCACAVGLIAVGVGAQLVLRQTIVQGATPGSLLPVVIIAVGAFLFLVAFVGCCGACKENYCLMVTFAIFLSLIMLVEVAVAIAGYVFRDKVMSEFNKDFRQQMQNYPKNNHTVSIVDRMQEDFKCCGAANYTDWGSIPLMSKARVPDSCCVNVTQGCGISFKVKEIHEEGCVEKIGGWLRSNVLVVAAAALGIAFVEVLGIIFACCLVKSIRSGYEVM.

The Cytoplasmic portion of the chain corresponds to 1-11 (MAVEGGMKCVK). The chain crosses the membrane as a helical span at residues 12 to 32 (FLLYVLLLAFCACAVGLIAVG). The Extracellular portion of the chain corresponds to 33 to 51 (VGAQLVLRQTIVQGATPGS). A helical membrane pass occupies residues 52–72 (LLPVVIIAVGAFLFLVAFVGC). At 73 to 81 (CGACKENYC) the chain is on the cytoplasmic side. A helical membrane pass occupies residues 82–102 (LMVTFAIFLSLIMLVEVAVAI). Residues 103 to 202 (AGYVFRDKVM…EKIGGWLRSN (100 aa)) are Extracellular-facing. 3 N-linked (GlcNAc...) asparagine glycosylation sites follow: asparagine 130, asparagine 150, and asparagine 172. Residues 203 to 223 (VLVVAAAALGIAFVEVLGIIF) traverse the membrane as a helical segment. Residues 224–238 (ACCLVKSIRSGYEVM) lie on the Cytoplasmic side of the membrane. Positions 234 to 238 (GYEVM) match the Lysosomal targeting motif motif.

The protein belongs to the tetraspanin (TM4SF) family. As to quaternary structure, interacts with TIMP1 and ITGB1 and recruits TIMP1 to ITGB1. Interacts with CD9. Identified in a complex with CD9 and ITGB3. Interacts with PMEL. Interacts with KDR/VEGFR2; identified in a complex with ITGB1 and KDR/VEGFR2 and is required to recruit KDR to ITGB1 complexes. Interacts with SYT7. Palmitoylated at a low, basal level in unstimulated platelets. The level of palmitoylation increases when platelets are activated by thrombin (in vitro).

Its subcellular location is the cell membrane. The protein resides in the lysosome membrane. It is found in the late endosome membrane. It localises to the endosome. The protein localises to the multivesicular body. Its subcellular location is the melanosome. The protein resides in the secreted. It is found in the extracellular exosome. It localises to the cell surface. Functions as a cell surface receptor for TIMP1 and plays a role in the activation of cellular signaling cascades. Plays a role in the activation of ITGB1 and integrin signaling, leading to the activation of AKT, FAK/PTK2 and MAP kinases. Promotes cell survival, reorganization of the actin cytoskeleton, cell adhesion, spreading and migration, via its role in the activation of AKT and FAK/PTK2. Plays a role in VEGFA signaling via its role in regulating the internalization of KDR/VEGFR2. Plays a role in intracellular vesicular transport processes, and is required for normal trafficking of the PMEL luminal domain that is essential for the development and maturation of melanocytes. Plays a role in the adhesion of leukocytes onto endothelial cells via its role in the regulation of SELP trafficking. May play a role in mast cell degranulation in response to Ms4a2/FceRI stimulation, but not in mast cell degranulation in response to other stimuli. The polypeptide is CD63 antigen (CD63) (Felis catus (Cat)).